A 493-amino-acid chain; its full sequence is Tripartite motif-containing protein 5 (493 aa).

Alanine 2 bears the N-acetylalanine mark. The RING-type zinc-finger motif lies at 15-59 (CPICLELLTQPLSLDCGHSFCQACLTANHKKSTLDKGERSCPVCR). Serine 86 carries the phosphoserine modification. A B box-type zinc finger spans residues 90–132 (QKVDHCARHGEKLLLFCKEDGKVICWLCERSQEHRGHHTFLTE). The Zn(2+) site is built by cysteine 95, histidine 98, cysteine 117, and histidine 123. Residues 131-223 (TEEVAQKYQV…LTKSETEMVQ (93 aa)) adopt a coiled-coil conformation. Positions 185-198 (FEQLRDILDWEESN) are required for interaction with GABARAP and for autophagy. Residues 281–493 (LKGMLEVFRE…VPMTLCSPSS (213 aa)) form the B30.2/SPRY domain.

It belongs to the TRIM/RBCC family. As to quaternary structure, can form homodimers and homotrimers. In addition to lower-order dimerization, also exhibits a higher-order multimerization and both low- and high-order multimerizations are essential for its restriction activity. Interacts with BTBD1 and BTBD2. Interacts with PSMC4, PSMC5, PSMD7 and HSPA8/HSC70. Interacts (via B30.2/SPRY domain) with HSPA1A/B. Interacts with PSMC2, MAP3K7/TAK1, TAB2 and TAB3. Interacts with SQSTM1. Interacts with TRIM6 and TRIM34. Interacts with ULK1 (phosphorylated form), GABARAP, GABARAPL1, GABARAPL2, MAP1LC3A, MAP1LC3C and BECN1. In terms of processing, degraded in a proteasome-independent fashion in the absence of viral infection but in a proteasome-dependent fashion following exposure to restriction sensitive virus. Autoubiquitinated in a RING finger- and UBE2D2-dependent manner. Monoubiquitinated by TRIM21. Deubiquitinated by Yersinia YopJ. Ubiquitination may not lead to proteasomal degradation.

The protein resides in the cytoplasm. It is found in the nucleus. The catalysed reaction is S-ubiquitinyl-[E2 ubiquitin-conjugating enzyme]-L-cysteine + [acceptor protein]-L-lysine = [E2 ubiquitin-conjugating enzyme]-L-cysteine + N(6)-ubiquitinyl-[acceptor protein]-L-lysine.. It participates in protein modification; protein ubiquitination. Capsid-specific restriction factor that prevents infection from non-host-adapted retroviruses. Blocks viral replication early in the life cycle, after viral entry but before reverse transcription. In addition to acting as a capsid-specific restriction factor, also acts as a pattern recognition receptor that activates innate immune signaling in response to the retroviral capsid lattice. Binding to the viral capsid triggers its E3 ubiquitin ligase activity, and in concert with the heterodimeric ubiquitin conjugating enzyme complex UBE2V1-UBE2N (also known as UBC13-UEV1A complex) generates 'Lys-63'-linked polyubiquitin chains, which in turn are catalysts in the autophosphorylation of the MAP3K7/TAK1 complex (includes TAK1, TAB2, and TAB3). Activation of the MAP3K7/TAK1 complex by autophosphorylation results in the induction and expression of NF-kappa-B and MAPK-responsive inflammatory genes, thereby leading to an innate immune response in the infected cell. Plays a role in regulating autophagy through activation of autophagy regulator BECN1 by causing its dissociation from its inhibitors BCL2 and TAB2. The protein is Tripartite motif-containing protein 5 (TRIM5) of Pongo pygmaeus (Bornean orangutan).